A 445-amino-acid polypeptide reads, in one-letter code: Zinc finger protein 296 (445 aa).

The segment covering 1–10 (MSRRKAGRVP) has biased composition (basic residues). The disordered stretch occupies residues 1–20 (MSRRKAGRVPRRVDPDTDTD). Lys31 participates in a covalent cross-link: Glycyl lysine isopeptide (Lys-Gly) (interchain with G-Cter in SUMO2). Positions 62 to 88 (SRPLGAPSTCAPRMPLSSKSSDRQPWT) are disordered. 3 C2H2-type zinc fingers span residues 138 to 161 (LSCLQCGRQYTSPWKLLCHAQWDH), 212 to 234 (PTCDVCKKTLSSFSNLKVHMRSH), and 240 to 262 (YSCDQCSYACAQSSKLNRHKKTH). The interval 256–359 (NRHKKTHRQL…TAPRKSHGPG (104 aa)) is disordered. The segment covering 269–278 (SPSTSASSRG) has biased composition (polar residues). Residues 320–332 (PGSGAQGGPGFVG) show a composition bias toward gly residues. The segment covering 338–351 (KVERTDPVKIEKTA) has biased composition (basic and acidic residues). C2H2-type zinc fingers lie at residues 360–382 (GKCEFCGKSFTNSSNLTVHRRSH), 388–410 (YTCDQCPYACAQSSKLNRHRRTH), and 418–441 (VKCPHCLVPFGLQATLDKHLRQKH).

It belongs to the krueppel C2H2-type zinc-finger protein family. As to quaternary structure, interacts with KLF4. In terms of tissue distribution, strongly expressed in testis and embryonic stem cells.

Its subcellular location is the nucleus. May be a transcriptional corepressor with KLF4. The chain is Zinc finger protein 296 from Mus musculus (Mouse).